The following is a 105-amino-acid chain: Urease subunit beta (105 aa).

This sequence belongs to the urease beta subunit family. In terms of assembly, heterotrimer of UreA (gamma), UreB (beta) and UreC (alpha) subunits. Three heterotrimers associate to form the active enzyme.

The protein resides in the cytoplasm. It carries out the reaction urea + 2 H2O + H(+) = hydrogencarbonate + 2 NH4(+). It participates in nitrogen metabolism; urea degradation; CO(2) and NH(3) from urea (urease route): step 1/1. This Pseudomonas putida (strain ATCC 47054 / DSM 6125 / CFBP 8728 / NCIMB 11950 / KT2440) protein is Urease subunit beta.